Reading from the N-terminus, the 352-residue chain is 4-hydroxy-3-methylbut-2-en-1-yl diphosphate synthase (flavodoxin) (352 aa).

The [4Fe-4S] cluster site is built by Cys262, Cys265, Cys297, and Glu304.

Belongs to the IspG family. The cofactor is [4Fe-4S] cluster.

It catalyses the reaction (2E)-4-hydroxy-3-methylbut-2-enyl diphosphate + oxidized [flavodoxin] + H2O + 2 H(+) = 2-C-methyl-D-erythritol 2,4-cyclic diphosphate + reduced [flavodoxin]. It functions in the pathway isoprenoid biosynthesis; isopentenyl diphosphate biosynthesis via DXP pathway; isopentenyl diphosphate from 1-deoxy-D-xylulose 5-phosphate: step 5/6. In terms of biological role, converts 2C-methyl-D-erythritol 2,4-cyclodiphosphate (ME-2,4cPP) into 1-hydroxy-2-methyl-2-(E)-butenyl 4-diphosphate. This is 4-hydroxy-3-methylbut-2-en-1-yl diphosphate synthase (flavodoxin) from Campylobacter curvus (strain 525.92).